A 443-amino-acid polypeptide reads, in one-letter code: Glutamate--tRNA ligase 1 (443 aa).

A 'HIGH' region motif is present at residues 9–19; the sequence is PSPTGYLHVGN. The 'KMSKS' region signature appears at 238–242; that stretch reads KISKR. Residue Lys241 coordinates ATP.

Belongs to the class-I aminoacyl-tRNA synthetase family. Glutamate--tRNA ligase type 1 subfamily. In terms of assembly, monomer.

The protein resides in the cytoplasm. It catalyses the reaction tRNA(Glu) + L-glutamate + ATP = L-glutamyl-tRNA(Glu) + AMP + diphosphate. Catalyzes the attachment of glutamate to tRNA(Glu) in a two-step reaction: glutamate is first activated by ATP to form Glu-AMP and then transferred to the acceptor end of tRNA(Glu). The chain is Glutamate--tRNA ligase 1 from Ehrlichia ruminantium (strain Welgevonden).